The chain runs to 882 residues: DNA mismatch repair protein MutS (882 aa).

Position 629–636 (629–636 (GPNMGGKS)) interacts with ATP.

The protein belongs to the DNA mismatch repair MutS family.

This protein is involved in the repair of mismatches in DNA. It is possible that it carries out the mismatch recognition step. This protein has a weak ATPase activity. The chain is DNA mismatch repair protein MutS from Ralstonia nicotianae (strain ATCC BAA-1114 / GMI1000) (Ralstonia solanacearum).